The sequence spans 1145 residues: Cellulose synthase-like protein D3 (1145 aa).

Residues 1 to 19 (MASNNHFMNSRSNLSTNSD) show a composition bias toward polar residues. 2 disordered regions span residues 1-38 (MASNNHFMNSRSNLSTNSDAAEAERHQQPVSNSVTFAR) and 189-208 (DNNKQQRPMLPPPAGGSKMD). 2 helical membrane-spanning segments follow: residues 289–309 (VISPYRLLILIRIVVLALFLM) and 319–339 (AIWLWGMSVVCELWFALSWLL). Asp419 is a catalytic residue. At Ser755 the chain carries Phosphoserine. Asp848 is a catalytic residue. The next 6 membrane-spanning stretches (helical) occupy residues 930 to 950 (FFLIVYCFLPALSLFSGQFIV), 956 to 976 (TFLVYLLIISITLCLLALLEI), 1002 to 1022 (LAAVIQGLLKVVAGIEISFTL), 1045 to 1065 (SLMIPPITIMMVNLIAIAVGF), 1079 to 1099 (LIGGVFFSFWVLAHLYPFAKG), and 1109 to 1129 (TIVYVWSGLVAITISLLWVAI).

Belongs to the glycosyltransferase 2 family. Plant cellulose synthase-like D subfamily. Preferentially expressed in root hair cells. Expressed in roots, leaves, stems, flowers and siliques.

The protein localises to the golgi apparatus membrane. Thought to be a Golgi-localized beta-glycan synthase that polymerize the backbones of noncellulosic polysaccharides (hemicelluloses) of plant cell wall. Required for synthesis of a cell wall polysaccharide essential for root hair elongation, but not initiation. May be the functional ortholog of rice CSLD1. This Arabidopsis thaliana (Mouse-ear cress) protein is Cellulose synthase-like protein D3 (CSLD3).